The primary structure comprises 593 residues: MADHKGTDNIDHNDVLDGSWCLITEAECEDDTLVDLFEESTNDSVVSNLLDDSESIIQGNSEESDRCIQELKRKLNVTPEKQISELSPRLSAVHITPERASKRRLFNDSGVVEDEAESNTIQVDSLLVQKDAGNQNGAECELNSILRSNNIRATVLCKFKDKFGVSFNELTRSFKSDKTCTPNWVITAIGIREDLRDACKVLLQQHVEFLEMICNDFSVLLLVEFKVTKNRETVLKLMCSMLNAKEEQILCEPPKLKSTAAALYFYKKIITDTCFKYGTLPSWVSRLTIVEHQLASADTFSLSEMVQWAYDNDFTEEASVAYNYACYATENTNAAAFLASNMQVKYVKDCVAMVRMYKRQEMKSMTMSEWISKCCKEETIGEEWKEIVQFLKYQGVNFLEFLIALKQFFKCTPKKMCIVIYGPPDTGKSMFCFKLVQFLKGQVVSYINKSSQFWLMPLQDAKIGLLDDATHNCWIYLDTYLRNAFDGNTFCLDIKHKNLQQTKLPPMIITTNVNVTTDESLFYLRSRLTCFNFPNKLPMSDKDEPLFTISDKSWTCFFRKFWNQLELQEDAARDPGEPEHPFCCTARNSVDFD.

The Nuclear localization signal motif lies at 72–74 (KRK). Positions 86–95 (LSPRLSAVHI) match the Nuclear export signal motif. At Ser-87 the chain carries Phosphoserine; by host. The segment at 134–297 (NQNGAECELN…TIVEHQLASA (164 aa)) is DNA-binding region. Residues 382–546 (EEWKEIVQFL…LPMSDKDEPL (165 aa)) form the SF3 helicase domain. 422–429 (GPPDTGKS) is an ATP binding site. Lys-503 participates in a covalent cross-link: Glycyl lysine isopeptide (Lys-Gly) (interchain with G-Cter in SUMO).

This sequence belongs to the papillomaviridae E1 protein family. As to quaternary structure, can form hexamers. Interacts with E2 protein; this interaction increases E1 DNA binding specificity. Interacts with host DNA polymerase subunit POLA2. Interacts with host single stranded DNA-binding protein RPA1. Interacts with host TOP1; this interaction stimulates the enzymatic activity of TOP1. In terms of processing, phosphorylated. Sumoylated.

The protein resides in the host nucleus. It catalyses the reaction Couples ATP hydrolysis with the unwinding of duplex DNA by translocating in the 3'-5' direction.. The enzyme catalyses ATP + H2O = ADP + phosphate + H(+). Its function is as follows. ATP-dependent DNA 3'-5' helicase required for initiation of viral DNA replication. It forms a complex with the viral E2 protein. The E1-E2 complex binds to the replication origin which contains binding sites for both proteins. During the initial step, a dimer of E1 interacts with a dimer of protein E2 leading to a complex that binds the viral origin of replication with high specificity. Then, a second dimer of E1 displaces the E2 dimer in an ATP-dependent manner to form the E1 tetramer. Following this, two E1 monomers are added to each half of the site, which results in the formation of two E1 trimers on the viral ori. Subsequently, two hexamers will be created. The double hexamer acts as a bi-directional helicase machinery and unwinds the viral DNA and then recruits the host DNA polymerase to start replication. The polypeptide is Replication protein E1 (Human papillomavirus type 48).